The sequence spans 56 residues: Large ribosomal subunit protein bL32 (56 aa).

Positions 1-16 (MAVQKSKKSRSMRGMR) are enriched in basic residues. A disordered region spans residues 1-22 (MAVQKSKKSRSMRGMRRSHDAL).

It belongs to the bacterial ribosomal protein bL32 family.

This chain is Large ribosomal subunit protein bL32, found in Aliivibrio salmonicida (strain LFI1238) (Vibrio salmonicida (strain LFI1238)).